Here is a 207-residue protein sequence, read N- to C-terminus: Protein THEM6 (207 aa).

Residues 1–21 form the signal peptide; it reads MLELLVASLSLALAFFALLDG. Asn-188 carries an N-linked (GlcNAc...) asparagine glycan. Residue Ser-199 is modified to Phosphoserine.

Belongs to the THEM6 family.

It is found in the secreted. The chain is Protein THEM6 (Them6) from Mus musculus (Mouse).